The primary structure comprises 413 residues: 26S proteasome regulatory subunit 6B homolog (413 aa).

The interval 1-30 (MATAMVLDPKPAEKLPATRPETSITDVPSD) is disordered. The stretch at 32-80 (EDDLYARLKSLQRQLEFIEIQEEYVKDELKNLRREHLRAQEEVKRIQSV) forms a coiled coil. 201-208 (GPPGTGKT) is a binding site for ATP.

Belongs to the AAA ATPase family.

The protein resides in the cytoplasm. Its subcellular location is the nucleus. In terms of biological role, the 26S proteasome is involved in the ATP-dependent degradation of ubiquitinated proteins. The regulatory (or ATPase) complex confers ATP dependency and substrate specificity to the 26S complex. The sequence is that of 26S proteasome regulatory subunit 6B homolog from Solanum tuberosum (Potato).